Consider the following 426-residue polypeptide: Putative F-box protein At4g38870 (426 aa).

Positions 47–92 (SVNSELLPVDLIMEILKKLSLKPLIRFLCVSKLWASIIRDPYFMKL) constitute an F-box domain.

This Arabidopsis thaliana (Mouse-ear cress) protein is Putative F-box protein At4g38870.